The following is a 505-amino-acid chain: Activin receptor type-1B (505 aa).

The first 23 residues, 1 to 23 (MAESAGASSFFPLVVLLLAGSGG), serve as a signal peptide directing secretion. Topologically, residues 24 to 126 (SGPRGVQALL…EHPSMWGPVE (103 aa)) are extracellular. A glycan (N-linked (GlcNAc...) asparagine) is linked at N43. A helical membrane pass occupies residues 127–149 (LVGIIAGPVFLLFLIIIIVFLVI). Topologically, residues 150 to 505 (NYHQRVYHNR…QLSVQEDVKI (356 aa)) are cytoplasmic. Residues 177–206 (KTLQDLVYDLSTSGSGSGLPLFVQRTVART) form the GS domain. The Protein kinase domain occupies 207–497 (IVLQEIIGKG…LRIKKTLSQL (291 aa)). Residues 213-221 (IGKGRFGEV) and K234 contribute to the ATP site. The active-site Proton acceptor is the D335. Residue Y380 is modified to Phosphotyrosine.

It belongs to the protein kinase superfamily. TKL Ser/Thr protein kinase family. TGFB receptor subfamily. In terms of assembly, forms an activin receptor complex with activin receptor type-2 (ACVR2A or ACVR2B). Part of a complex consisting of MAGI2/ARIP1, ACVR2A, ACVR1B and SMAD3. Interacts with SMAD2 and SMAD3. Interacts with SMAD7. Interacts with FKBP1A. Interacts with IGSF1. Interacts with CRIPTO. Interacts with TDP2. Interacts with TSC22D1/TSC-22. Mg(2+) is required as a cofactor. Requires Mn(2+) as cofactor. Post-translationally, autophosphorylated. Phosphorylated by activin receptor type-2 (ACVR2A or ACVR2B) in response to activin-binding at serine and threonine residues in the GS domain. Phosphorylation of ACVR1B by activin receptor type-2 regulates association with SMAD7. In terms of processing, ubiquitinated. Level of ubiquitination is regulated by the SMAD7-SMURF1 complex. Ubiquitinated. In terms of tissue distribution, expressed in many tissues, most strongly in kidney, pancreas, brain, lung, and liver.

It localises to the cell membrane. The catalysed reaction is L-threonyl-[receptor-protein] + ATP = O-phospho-L-threonyl-[receptor-protein] + ADP + H(+). It carries out the reaction L-seryl-[receptor-protein] + ATP = O-phospho-L-seryl-[receptor-protein] + ADP + H(+). Its activity is regulated as follows. Activin receptor type-2 (ACVR2A or ACVR2B) activates the type-1 receptor through phosphorylation of its regulatory GS domain. Functionally, transmembrane serine/threonine kinase activin type-1 receptor forming an activin receptor complex with activin receptor type-2 (ACVR2A or ACVR2B). Transduces the activin signal from the cell surface to the cytoplasm and is thus regulating a many physiological and pathological processes including neuronal differentiation and neuronal survival, hair follicle development and cycling, FSH production by the pituitary gland, wound healing, extracellular matrix production, immunosuppression and carcinogenesis. Activin is also thought to have a paracrine or autocrine role in follicular development in the ovary. Within the receptor complex, type-2 receptors (ACVR2A and/or ACVR2B) act as a primary activin receptors whereas the type-1 receptors like ACVR1B act as downstream transducers of activin signals. Activin binds to type-2 receptor at the plasma membrane and activates its serine-threonine kinase. The activated receptor type-2 then phosphorylates and activates the type-1 receptor such as ACVR1B. Once activated, the type-1 receptor binds and phosphorylates the SMAD proteins SMAD2 and SMAD3, on serine residues of the C-terminal tail. Soon after their association with the activin receptor and subsequent phosphorylation, SMAD2 and SMAD3 are released into the cytoplasm where they interact with the common partner SMAD4. This SMAD complex translocates into the nucleus where it mediates activin-induced transcription. Inhibitory SMAD7, which is recruited to ACVR1B through FKBP1A, can prevent the association of SMAD2 and SMAD3 with the activin receptor complex, thereby blocking the activin signal. Activin signal transduction is also antagonized by the binding to the receptor of inhibin-B via the IGSF1 inhibin coreceptor. ACVR1B also phosphorylates TDP2. The sequence is that of Activin receptor type-1B (ACVR1B) from Homo sapiens (Human).